The primary structure comprises 314 residues: Aspartate carbamoyltransferase catalytic subunit (314 aa).

Carbamoyl phosphate contacts are provided by arginine 55 and threonine 56. Lysine 83 is an L-aspartate binding site. Positions 105, 139, and 142 each coordinate carbamoyl phosphate. Residues arginine 172 and arginine 226 each contribute to the L-aspartate site. 2 residues coordinate carbamoyl phosphate: glycine 267 and proline 268.

The protein belongs to the aspartate/ornithine carbamoyltransferase superfamily. ATCase family. In terms of assembly, heterododecamer (2C3:3R2) of six catalytic PyrB chains organized as two trimers (C3), and six regulatory PyrI chains organized as three dimers (R2).

The catalysed reaction is carbamoyl phosphate + L-aspartate = N-carbamoyl-L-aspartate + phosphate + H(+). It participates in pyrimidine metabolism; UMP biosynthesis via de novo pathway; (S)-dihydroorotate from bicarbonate: step 2/3. Functionally, catalyzes the condensation of carbamoyl phosphate and aspartate to form carbamoyl aspartate and inorganic phosphate, the committed step in the de novo pyrimidine nucleotide biosynthesis pathway. In Rhodococcus opacus (strain B4), this protein is Aspartate carbamoyltransferase catalytic subunit.